The chain runs to 678 residues: Ribosome biogenesis protein BOP1 homolog (678 aa).

The segment covering 1–10 has biased composition (basic and acidic residues); the sequence is MGHSDGDHGS. Positions 1-73 are disordered; it reads MGHSDGDHGS…VAPRNTIGDV (73 aa). Residues 24–63 are compositionally biased toward acidic residues; it reads WSDDDDEGSLSFEDSGEGSDAESDEPDAPAVEESDSSEDE. WD repeat units follow at residues 343–384, 386–424, 463–505, 508–548, 549–588, 592–631, and 647–678; these read GHNG…KVWN, GGVV…EDAQ, IHHK…SHHP, KLPG…KKLE, SGVR…RPYK, NHSK…DLNQ, and SDGR…LYCD.

This sequence belongs to the WD repeat BOP1/ERB1 family.

The protein resides in the nucleus. It localises to the nucleolus. It is found in the nucleoplasm. Functionally, required for maturation of ribosomal RNAs and formation of the large ribosomal subunit. This is Ribosome biogenesis protein BOP1 homolog from Oryza sativa subsp. japonica (Rice).